Here is a 121-residue protein sequence, read N- to C-terminus: Large ribosomal subunit protein uL22c (121 aa).

This sequence belongs to the universal ribosomal protein uL22 family. As to quaternary structure, part of the 50S ribosomal subunit.

Its subcellular location is the plastid. It is found in the chloroplast. Functionally, this protein binds specifically to 23S rRNA. In terms of biological role, the globular domain of the protein is located near the polypeptide exit tunnel on the outside of the subunit, while an extended beta-hairpin is found that lines the wall of the exit tunnel in the center of the 70S ribosome. This chain is Large ribosomal subunit protein uL22c (rpl22), found in Lemna minor (Common duckweed).